The following is a 209-amino-acid chain: Uracil phosphoribosyltransferase (209 aa).

Residues R79, R104, and 131–139 each bind 5-phospho-alpha-D-ribose 1-diphosphate; that span reads DPMLATGGS. Uracil-binding positions include I194 and 199–201; that span reads GDA. D200 lines the 5-phospho-alpha-D-ribose 1-diphosphate pocket.

Belongs to the UPRTase family. Mg(2+) is required as a cofactor.

It carries out the reaction UMP + diphosphate = 5-phospho-alpha-D-ribose 1-diphosphate + uracil. It participates in pyrimidine metabolism; UMP biosynthesis via salvage pathway; UMP from uracil: step 1/1. Its activity is regulated as follows. Allosterically activated by GTP. Its function is as follows. Catalyzes the conversion of uracil and 5-phospho-alpha-D-ribose 1-diphosphate (PRPP) to UMP and diphosphate. This Streptococcus thermophilus (strain CNRZ 1066) protein is Uracil phosphoribosyltransferase.